Here is an 88-residue protein sequence, read N- to C-terminus: Small ribosomal subunit protein bS20 (88 aa).

Residues 1–22 (MANTPSAKKAVNKIAKRTQVNK) form a disordered region.

The protein belongs to the bacterial ribosomal protein bS20 family.

Its function is as follows. Binds directly to 16S ribosomal RNA. In Bartonella bacilliformis (strain ATCC 35685 / KC583 / Herrer 020/F12,63), this protein is Small ribosomal subunit protein bS20.